The primary structure comprises 88 residues: Large ribosomal subunit protein bL27 (88 aa).

The segment covering 1–13 (MATKKSGGSSSNG) has biased composition (low complexity). Residues 1 to 24 (MATKKSGGSSSNGRDSRGRRLGVK) form a disordered region.

This sequence belongs to the bacterial ribosomal protein bL27 family.

This chain is Large ribosomal subunit protein bL27, found in Ehrlichia ruminantium (strain Gardel).